The following is an 874-amino-acid chain: Alanine--tRNA ligase (874 aa).

The Zn(2+) site is built by H562, H566, C663, and H667.

It belongs to the class-II aminoacyl-tRNA synthetase family. It depends on Zn(2+) as a cofactor.

The protein localises to the cytoplasm. The enzyme catalyses tRNA(Ala) + L-alanine + ATP = L-alanyl-tRNA(Ala) + AMP + diphosphate. Catalyzes the attachment of alanine to tRNA(Ala) in a two-step reaction: alanine is first activated by ATP to form Ala-AMP and then transferred to the acceptor end of tRNA(Ala). Also edits incorrectly charged Ser-tRNA(Ala) and Gly-tRNA(Ala) via its editing domain. In Bordetella bronchiseptica (strain ATCC BAA-588 / NCTC 13252 / RB50) (Alcaligenes bronchisepticus), this protein is Alanine--tRNA ligase.